Here is a 424-residue protein sequence, read N- to C-terminus: Serine--tRNA ligase (424 aa).

232–234 (TAE) is a binding site for L-serine. 263 to 265 (RKE) lines the ATP pocket. Glu286 serves as a coordination point for L-serine. 350 to 353 (EISS) lines the ATP pocket. Residue Ser386 participates in L-serine binding.

It belongs to the class-II aminoacyl-tRNA synthetase family. Type-1 seryl-tRNA synthetase subfamily. Homodimer. The tRNA molecule binds across the dimer.

The protein resides in the cytoplasm. The enzyme catalyses tRNA(Ser) + L-serine + ATP = L-seryl-tRNA(Ser) + AMP + diphosphate + H(+). It catalyses the reaction tRNA(Sec) + L-serine + ATP = L-seryl-tRNA(Sec) + AMP + diphosphate + H(+). It participates in aminoacyl-tRNA biosynthesis; selenocysteinyl-tRNA(Sec) biosynthesis; L-seryl-tRNA(Sec) from L-serine and tRNA(Sec): step 1/1. Its function is as follows. Catalyzes the attachment of serine to tRNA(Ser). Is also able to aminoacylate tRNA(Sec) with serine, to form the misacylated tRNA L-seryl-tRNA(Sec), which will be further converted into selenocysteinyl-tRNA(Sec). The chain is Serine--tRNA ligase from Thermodesulfovibrio yellowstonii (strain ATCC 51303 / DSM 11347 / YP87).